The primary structure comprises 214 residues: Cell division protein SepF (214 aa).

Residues 24–120 (DNYEEYEERK…NTRRAQESTA (97 aa)) form a disordered region. Positions 30–40 (EERKAVNEPPR) are enriched in basic and acidic residues. A compositionally biased stretch (polar residues) spans 55–67 (ESYSQPAYTQQSE). The segment covering 69 to 98 (VVEKPSARYRSAEAHQERDTQQAAYTEKKV) has biased composition (basic and acidic residues). Polar residues predominate over residues 101–120 (MRSSNQSATTNTRRAQESTA).

Belongs to the SepF family. As to quaternary structure, homodimer. Interacts with FtsZ.

The protein resides in the cytoplasm. In terms of biological role, cell division protein that is part of the divisome complex and is recruited early to the Z-ring. Probably stimulates Z-ring formation, perhaps through the cross-linking of FtsZ protofilaments. Its function overlaps with FtsA. The polypeptide is Cell division protein SepF (Enterococcus faecalis (strain ATCC 700802 / V583)).